A 354-amino-acid polypeptide reads, in one-letter code: Homer protein homolog 1 (354 aa).

One can recognise a WH1 domain in the interval 1–110; that stretch reads MGEQPIFSTR…EKFQEFKEAA (110 aa). At Gly2 the chain carries N-acetylglycine. The disordered stretch occupies residues 114–173; sequence KEKSQEKMELTSTPSQESAGGDLQSPLTPESINGTDDERTPDVTQNSEPRAEPTQNALPF. Composition is skewed to polar residues over residues 138–147 and 155–173; these read SPLTPESING and DVTQNSEPRAEPTQNALPF. A coiled-coil region spans residues 181–352; it reads KHWEAELATL…LRDNLAKLLE (172 aa). The tract at residues 290 to 354 is required for tetramerization; sequence KLQEVEIRNK…DNLAKLLECS (65 aa). The residue at position 306 (Ser306) is a Phosphoserine.

It belongs to the Homer family. In terms of assembly, tetramer; this tetrameric structure is critical for forming the high-order complex with SHANK1, which in turn is necessary for the structural and functional integrity of dendritic spines. Interacts with GRM1, GRM5, ITPR1, DNM3, RYR1, RYR2 and SHANK3. Interacts with IFT57 and OPHN1. Isoform 1 encodes a coiled-coil structure that mediates homo- and heteromultimerization. Interacts with SHANK1; forms high-order polymerized complex with a mesh-like network structure, at least composed of SHANK1, HOMER1 and DLGAP1; the complex formation is SHANK1 multimerization dependent. Interacts with NFATC4. Interacts with DAGLA (via PPXXF motif); this interaction is required for the cell membrane localization of DAGLA. Interacts with SRGAP2.

It localises to the cytoplasm. Its subcellular location is the postsynaptic density. The protein localises to the synapse. It is found in the cell projection. The protein resides in the dendritic spine. Postsynaptic density scaffolding protein. Binds and cross-links cytoplasmic regions of GRM1, GRM5, ITPR1, DNM3, RYR1, RYR2, SHANK1 and SHANK3. By physically linking GRM1 and GRM5 with ER-associated ITPR1 receptors, it aids the coupling of surface receptors to intracellular calcium release. May also couple GRM1 to PI3 kinase through its interaction with AGAP2. Isoform 1 regulates the trafficking and surface expression of GRM5. Isoform 3 acts as a natural dominant negative, in dynamic competition with constitutively expressed isoform 1 to regulate synaptic metabotropic glutamate function. Isoform 3, may be involved in the structural changes that occur at synapses during long-lasting neuronal plasticity and development. Forms a high-order complex with SHANK1, which in turn is necessary for the structural and functional integrity of dendritic spines. Negatively regulates T cell activation by inhibiting the calcineurin-NFAT pathway. Acts by competing with calcineurin/PPP3CA for NFAT protein binding, hence preventing NFAT activation by PPP3CA. The protein is Homer protein homolog 1 of Homo sapiens (Human).